The chain runs to 251 residues: Ribosome maturation factor RimP (251 aa).

A disordered region spans residues 176–251 (SLRRGSAPPQ…ARLKNRDTLH (76 aa)). The segment covering 186–196 (DGEEGDEEEGA) has biased composition (acidic residues). Over residues 216–226 (PKLDKKSDKPV) the composition is skewed to basic and acidic residues.

It belongs to the RimP family.

Its subcellular location is the cytoplasm. Required for maturation of 30S ribosomal subunits. The protein is Ribosome maturation factor RimP of Methylorubrum extorquens (strain PA1) (Methylobacterium extorquens).